Here is a 328-residue protein sequence, read N- to C-terminus: GMP reductase (328 aa).

The Thioimidate intermediate role is filled by cysteine 176. NADP(+) is bound at residue 205–228 (IIADGGIRTHGDIAKSIRFGASMI).

The protein belongs to the IMPDH/GMPR family. GuaC type 2 subfamily.

It catalyses the reaction IMP + NH4(+) + NADP(+) = GMP + NADPH + 2 H(+). Functionally, catalyzes the irreversible NADPH-dependent deamination of GMP to IMP. It functions in the conversion of nucleobase, nucleoside and nucleotide derivatives of G to A nucleotides, and in maintaining the intracellular balance of A and G nucleotides. This is GMP reductase from Streptococcus pneumoniae (strain Taiwan19F-14).